Consider the following 400-residue polypeptide: CCA-adding enzyme (400 aa).

Gly28 and Arg31 together coordinate ATP. The CTP site is built by Gly28 and Arg31. The Mg(2+) site is built by Asp41 and Asp43. ATP contacts are provided by Arg112, Asp155, Arg158, Arg161, and Arg164. CTP-binding residues include Arg112, Asp155, Arg158, Arg161, and Arg164.

It belongs to the tRNA nucleotidyltransferase/poly(A) polymerase family. Bacterial CCA-adding enzyme type 3 subfamily. In terms of assembly, homodimer. It depends on Mg(2+) as a cofactor.

It catalyses the reaction a tRNA precursor + 2 CTP + ATP = a tRNA with a 3' CCA end + 3 diphosphate. The enzyme catalyses a tRNA with a 3' CCA end + 2 CTP + ATP = a tRNA with a 3' CCACCA end + 3 diphosphate. In terms of biological role, catalyzes the addition and repair of the essential 3'-terminal CCA sequence in tRNAs without using a nucleic acid template. Adds these three nucleotides in the order of C, C, and A to the tRNA nucleotide-73, using CTP and ATP as substrates and producing inorganic pyrophosphate. tRNA 3'-terminal CCA addition is required both for tRNA processing and repair. Also involved in tRNA surveillance by mediating tandem CCA addition to generate a CCACCA at the 3' terminus of unstable tRNAs. While stable tRNAs receive only 3'-terminal CCA, unstable tRNAs are marked with CCACCA and rapidly degraded. In Staphylococcus epidermidis (strain ATCC 12228 / FDA PCI 1200), this protein is CCA-adding enzyme.